Consider the following 83-residue polypeptide: U5-theraphotoxin-Hs1b 2 (83 aa).

An N-terminal signal peptide occupies residues Met-1–Ala-21. Positions Ser-22–Arg-49 are excised as a propeptide. Cystine bridges form between Cys-51-Cys-63, Cys-56-Cys-68, and Cys-62-Cys-75.

It belongs to the neurotoxin 10 (Hwtx-1) family. 51 (Hntx-8) subfamily. Hntx-8 sub-subfamily. Expressed by the venom gland.

It localises to the secreted. Functionally, agglutinates erythrocytes. The polypeptide is U5-theraphotoxin-Hs1b 2 (Cyriopagopus schmidti (Chinese bird spider)).